A 244-amino-acid polypeptide reads, in one-letter code: Small ribosomal subunit protein uS2 (244 aa).

This sequence belongs to the universal ribosomal protein uS2 family.

The chain is Small ribosomal subunit protein uS2 from Halalkalibacterium halodurans (strain ATCC BAA-125 / DSM 18197 / FERM 7344 / JCM 9153 / C-125) (Bacillus halodurans).